Here is a 461-residue protein sequence, read N- to C-terminus: ATP synthase subunit beta (461 aa).

Residue Gly-151–Thr-158 coordinates ATP.

The protein belongs to the ATPase alpha/beta chains family. As to quaternary structure, F-type ATPases have 2 components, CF(1) - the catalytic core - and CF(0) - the membrane proton channel. CF(1) has five subunits: alpha(3), beta(3), gamma(1), delta(1), epsilon(1). CF(0) has three main subunits: a(1), b(2) and c(9-12). The alpha and beta chains form an alternating ring which encloses part of the gamma chain. CF(1) is attached to CF(0) by a central stalk formed by the gamma and epsilon chains, while a peripheral stalk is formed by the delta and b chains.

It is found in the cell inner membrane. The catalysed reaction is ATP + H2O + 4 H(+)(in) = ADP + phosphate + 5 H(+)(out). Produces ATP from ADP in the presence of a proton gradient across the membrane. The catalytic sites are hosted primarily by the beta subunits. The chain is ATP synthase subunit beta from Pseudoalteromonas translucida (strain TAC 125).